The primary structure comprises 117 residues: Large ribosomal subunit protein bL20 (117 aa).

This sequence belongs to the bacterial ribosomal protein bL20 family.

In terms of biological role, binds directly to 23S ribosomal RNA and is necessary for the in vitro assembly process of the 50S ribosomal subunit. It is not involved in the protein synthesizing functions of that subunit. The sequence is that of Large ribosomal subunit protein bL20 from Idiomarina loihiensis (strain ATCC BAA-735 / DSM 15497 / L2-TR).